The following is a 316-amino-acid chain: DnaJ homolog subfamily B member 13 (316 aa).

In terms of domain architecture, J spans Asp-4–Gly-68.

As to quaternary structure, homodimer. Component of the axonemal radial spoke complex 1 (RS1), at least composed of spoke head proteins RSPH1, RSPH3, RSPH9 and the cilia-specific component RSPH4A or sperm-specific component RSPH6A, spoke stalk proteins RSPH14, DNAJB13, DYDC1, ROPN1L and NME5, and the anchor protein IQUB. Interacts with SUN5. Interacts with IQUB. As to expression, specifically expressed in testis and trachea.

Its subcellular location is the cell projection. The protein resides in the cilium. It is found in the flagellum. Functions as part of axonemal radial spoke complexes that play an important part in the motility of sperm and cilia. This chain is DnaJ homolog subfamily B member 13 (DNAJB13), found in Homo sapiens (Human).